The following is a 448-amino-acid chain: B box and SPRY domain-containing protein (448 aa).

Positions 1 to 18 are enriched in low complexity; it reads MSSDVSGTESGSESGPES. The disordered stretch occupies residues 1 to 58; that stretch reads MSSDVSGTESGSESGPESVPEPVPEPGPEPESEPGPGPAPGPGPGPAPGPGPGLGREP. A compositionally biased stretch (pro residues) spans 19 to 51; it reads VPEPVPEPGPEPESEPGPGPAPGPGPGPAPGPG. The B box-type zinc finger occupies 63-111; sequence QPCQLCPEHGKPLSWFCLSERRPVCATCAGFGGRCHRHRIRRAEEHAEE. A B30.2/SPRY domain is found at 257–448; that stretch reads SPLLTQLWAT…VADQVISIVC (192 aa).

In terms of assembly, interacts with TRPV5 and TRPV6. Interacts with YWHAZ/14-3-3 protein zeta. In terms of tissue distribution, predominantly expressed in testis. Expressed in brain at low levels.

The protein resides in the cytoplasm. It localises to the membrane. In terms of biological role, may regulate epithelial calcium transport by inhibiting TRPV5 activity. This Rattus norvegicus (Rat) protein is B box and SPRY domain-containing protein (Bspry).